Reading from the N-terminus, the 106-residue chain is ATP-dependent Clp protease adapter protein ClpS (106 aa).

This sequence belongs to the ClpS family. As to quaternary structure, binds to the N-terminal domain of the chaperone ClpA.

Involved in the modulation of the specificity of the ClpAP-mediated ATP-dependent protein degradation. The polypeptide is ATP-dependent Clp protease adapter protein ClpS (Vibrio campbellii (strain ATCC BAA-1116)).